Consider the following 1483-residue polypeptide: Guanylyl cyclase, membrane (1483 aa).

Transmembrane regions (helical) follow at residues 50-70 (ISII…YISP), 143-163 (FILR…TFTA), 168-188 (LWKL…LIFE), 198-218 (MVLL…PSML), 219-239 (ASGG…QIAG), and 242-262 (MVLL…ISRF). The disordered stretch occupies residues 323 to 376 (KKDEESNLTGKKQSKVVVSPPPPPTAAAPQQQDNEISTPQNSRKIVDPQSPSSL). Positions 355 to 376 (DNEISTPQNSRKIVDPQSPSSL) are enriched in polar residues. The Guanylate cyclase 1 domain maps to 395–517 (TVLFCEIVNF…DTINTSSRMA (123 aa)). Disordered regions lie at residues 598–619 (NNTI…THPN) and 672–838 (LTSP…GDDF). Polar residues predominate over residues 610–619 (GSATGPTHPN). 3 stretches are compositionally biased toward low complexity: residues 672–684 (LTSP…PQQS), 693–712 (SPRL…SSST), and 720–765 (NNNN…NNNN). Polar residues predominate over residues 772-786 (SPISQNTTPTGSLSL). The next 6 membrane-spanning stretches (helical) occupy residues 907–927 (ILAS…VDYF), 982–1002 (IITG…YVVS), 1016–1036 (VVMV…SVPP), 1040–1060 (IPLD…CYNF), 1061–1081 (SGIK…FIEI), and 1094–1114 (IYLS…ITSY). The Guanylate cyclase 2 domain maps to 1168–1296 (TIFLSDIVGF…ESVQITQQME (129 aa)). Mg(2+) is bound by residues Asp-1173, Ile-1174, and Asp-1217. Disordered stretches follow at residues 1348 to 1369 (QPEV…SLQY) and 1393 to 1483 (NQND…SESS). Residues 1354 to 1369 (RSVSVSKSNFGGSLQY) show a composition bias toward polar residues. Residues 1405 to 1416 (NENGNESSSSNI) are compositionally biased toward low complexity. Over residues 1432–1444 (NEDDESSYEDDQE) the composition is skewed to acidic residues. Residues 1446–1465 (NQYLNNSENNKNNNNNSNQI) show a composition bias toward low complexity.

This sequence belongs to the adenylyl cyclase class-4/guanylyl cyclase family. As to quaternary structure, homodimer. Mg(2+) serves as cofactor.

The protein localises to the membrane. The enzyme catalyses GTP = 3',5'-cyclic GMP + diphosphate. With respect to regulation, activated by guanosine 5'-3-O-(thio)triphosphate (GTPgammaS). Inhibited by calcium. Functionally, synthesizes cyclic GMP (cGMP) from GTP, after activation by heterotrimeric or monomeric G proteins. Involved in chemotaxis. This is Guanylyl cyclase, membrane (gca) from Dictyostelium discoideum (Social amoeba).